Consider the following 309-residue polypeptide: Aspartate carbamoyltransferase catalytic subunit (309 aa).

2 residues coordinate carbamoyl phosphate: Arg-54 and Thr-55. Residue Lys-82 participates in L-aspartate binding. The carbamoyl phosphate site is built by Arg-104, His-132, and Gln-135. Positions 165 and 219 each coordinate L-aspartate. 2 residues coordinate carbamoyl phosphate: Gly-260 and Pro-261.

The protein belongs to the aspartate/ornithine carbamoyltransferase superfamily. ATCase family. As to quaternary structure, heterododecamer (2C3:3R2) of six catalytic PyrB chains organized as two trimers (C3), and six regulatory PyrI chains organized as three dimers (R2).

It catalyses the reaction carbamoyl phosphate + L-aspartate = N-carbamoyl-L-aspartate + phosphate + H(+). Its pathway is pyrimidine metabolism; UMP biosynthesis via de novo pathway; (S)-dihydroorotate from bicarbonate: step 2/3. In terms of biological role, catalyzes the condensation of carbamoyl phosphate and aspartate to form carbamoyl aspartate and inorganic phosphate, the committed step in the de novo pyrimidine nucleotide biosynthesis pathway. In Parafrankia sp. (strain EAN1pec), this protein is Aspartate carbamoyltransferase catalytic subunit.